The primary structure comprises 330 residues: Probable UDP-3-O-acylglucosamine N-acyltransferase 1, mitochondrial (330 aa).

A mitochondrion-targeting transit peptide spans 1 to 52 (MANSLRTLFSVSTHGVFLNKRSSYRVRKVFVGMPLRICSEIPRFVSVSCIRS). Position 160–162 (160–162 (FGF)) interacts with UDP-N-acetyl-alpha-D-glucosamine. Residues Asp-210 and Gln-214 each coordinate hexadecanoate. Catalysis depends on His-217, which acts as the Proton acceptor. Positions 218, 236, and 254 each coordinate UDP-N-acetyl-alpha-D-glucosamine.

The protein belongs to the transferase hexapeptide repeat family. LpxD subfamily. As to quaternary structure, homotrimer.

The protein localises to the mitochondrion. The catalysed reaction is a UDP-3-O-[(3R)-3-hydroxyacyl]-alpha-D-glucosamine + a (3R)-hydroxyacyl-[ACP] = a UDP-2-N,3-O-bis[(3R)-3-hydroxyacyl]-alpha-D-glucosamine + holo-[ACP] + H(+). It participates in glycolipid biosynthesis; lipid IV(A) biosynthesis; lipid IV(A) from (3R)-3-hydroxytetradecanoyl-[acyl-carrier-protein] and UDP-N-acetyl-alpha-D-glucosamine: step 3/6. Functionally, involved in the biosynthesis of lipid A, a phosphorylated glycolipid that in bacteria anchors the lipopolysaccharide to the outer membrane of the cell. Lipid A-like molecules in plants may serve as structural components of the outer membranes of mitochondria and/or chloroplasts, or may be involved in signal transduction or plant defense responses. The polypeptide is Probable UDP-3-O-acylglucosamine N-acyltransferase 1, mitochondrial (LPXD1) (Arabidopsis thaliana (Mouse-ear cress)).